Here is a 741-residue protein sequence, read N- to C-terminus: Penicillin-binding protein 1B (741 aa).

The Cytoplasmic portion of the chain corresponds to 1-12; it reads MYPVNLKLSIKF. The helical; Signal-anchor for type II membrane protein transmembrane segment at 13–33 threads the bilayer; that stretch reads LFYFFLYFLLIIIIYGVYLYF. Residues 34–741 lie on the Extracellular side of the membrane; that stretch reads KINQVIHGKI…WIRNHNIFCT (708 aa). The interval 139 to 311 is transglycosylase; sequence LRLDPQLIAM…SLYNPWNNPV (173 aa). The active-site Proton donor; for transglycosylase activity is Glu-177. The interval 395–687 is transpeptidase; the sequence is ENAIRHGIQQ…STGAMKIYHN (293 aa). Catalysis depends on Ser-454, which acts as the Acyl-ester intermediate; for transpeptidase activity.

The protein in the N-terminal section; belongs to the glycosyltransferase 51 family. In the C-terminal section; belongs to the transpeptidase family.

The protein localises to the cell membrane. It catalyses the reaction [GlcNAc-(1-&gt;4)-Mur2Ac(oyl-L-Ala-gamma-D-Glu-L-Lys-D-Ala-D-Ala)](n)-di-trans,octa-cis-undecaprenyl diphosphate + beta-D-GlcNAc-(1-&gt;4)-Mur2Ac(oyl-L-Ala-gamma-D-Glu-L-Lys-D-Ala-D-Ala)-di-trans,octa-cis-undecaprenyl diphosphate = [GlcNAc-(1-&gt;4)-Mur2Ac(oyl-L-Ala-gamma-D-Glu-L-Lys-D-Ala-D-Ala)](n+1)-di-trans,octa-cis-undecaprenyl diphosphate + di-trans,octa-cis-undecaprenyl diphosphate + H(+). It carries out the reaction Preferential cleavage: (Ac)2-L-Lys-D-Ala-|-D-Ala. Also transpeptidation of peptidyl-alanyl moieties that are N-acyl substituents of D-alanine.. It functions in the pathway cell wall biogenesis; peptidoglycan biosynthesis. Functionally, cell wall formation. Synthesis of cross-linked peptidoglycan from the lipid intermediates. The enzyme has a penicillin-insensitive transglycosylase N-terminal domain (formation of linear glycan strands) and a penicillin-sensitive transpeptidase C-terminal domain (cross-linking of the peptide subunits). The chain is Penicillin-binding protein 1B (mrcB) from Buchnera aphidicola subsp. Baizongia pistaciae (strain Bp).